Here is a 500-residue protein sequence, read N- to C-terminus: Protein shisa-6 (500 aa).

The signal sequence occupies residues 1–25; that stretch reads MALRRLLLLLLLSLESLDLLPSVHG. The Extracellular portion of the chain corresponds to 26–174; it reads ARGRAANRTL…NKYDPEKDKT (149 aa). Residues asparagine 32 and asparagine 59 are each glycosylated (N-linked (GlcNAc...) asparagine). Residues 52-73 are disordered; sequence ARGGRELNGTARAPGIPEAGSR. The helical transmembrane segment at 175–195 threads the bilayer; that stretch reads NFTVYITCGVIAFVIVAGVFA. The Cytoplasmic portion of the chain corresponds to 196–500; that stretch reads KVSYDKAHRP…YTASKTEVTV (305 aa). Residues 240–255 show a composition bias toward polar residues; that stretch reads TSPKENTPVRSSSKNH. Disordered stretches follow at residues 240 to 269 and 349 to 378; these read TSPK…PEKP and SQQK…DRGL. Phosphoserine is present on residues serine 391, serine 397, and serine 409. Threonine 433 carries the post-translational modification Phosphothreonine. A disordered region spans residues 444–470; it reads MHSHPSASNNSYATLGQSQTAAKRHAF. Positions 448–464 are enriched in polar residues; it reads PSASNNSYATLGQSQTA. Position 477 is a phosphothreonine (threonine 477). A PDZ-binding motif is present at residues 497-500; sequence EVTV.

Belongs to the shisa family. As to quaternary structure, component of the postsynaptic hippocampal AMPA-type glutamate receptor (AMPAR) complex, at least composed of pore forming AMPAR subunits GRIA1, GRIA2 and GRIA3 and AMPAR auxiliary proteins SHISA6 and SHISA7. Interacts (via PDZ-binding motif) with DLG4/PSD-95 (via PDZ domain); the interaction is direct. In terms of tissue distribution, expressed in the developing ventral mesencephalon.

Its subcellular location is the membrane. It is found in the postsynaptic density. In terms of biological role, involved in maintenance of high-frequency synaptic transmission at hippocampal CA3-CA1 synapses. Regulates AMPA-type glutamate receptor (AMPAR) immobilization at postsynaptic density keeping the channels in an activated state in the presence of glutamate and preventing synaptic depression. May play a role in self-renewal and differentiation of spermatogonial stem cells by inhibiting canonical Wnt signaling pathway. This chain is Protein shisa-6, found in Homo sapiens (Human).